We begin with the raw amino-acid sequence, 397 residues long: Elongation factor Tu (397 aa).

A tr-type G domain is found at 10 to 206; sequence KPHVNIGTIG…AVDEYIPTPE (197 aa). Residues 19–26 form a G1 region; sequence GHVDHGKT. GTP is bound at residue 19-26; sequence GHVDHGKT. T26 contacts Mg(2+). Residues 60-64 form a G2 region; sequence GITIS. Residues 81–84 are G3; that stretch reads DCPG. Residues 81 to 85 and 136 to 139 contribute to the GTP site; these read DCPGH and NKAD. The G4 stretch occupies residues 136 to 139; that stretch reads NKAD. Residues 174 to 176 form a G5 region; it reads SAL.

Belongs to the TRAFAC class translation factor GTPase superfamily. Classic translation factor GTPase family. EF-Tu/EF-1A subfamily. In terms of assembly, monomer.

It localises to the cytoplasm. The catalysed reaction is GTP + H2O = GDP + phosphate + H(+). Functionally, GTP hydrolase that promotes the GTP-dependent binding of aminoacyl-tRNA to the A-site of ribosomes during protein biosynthesis. In Clostridium tetani (strain Massachusetts / E88), this protein is Elongation factor Tu.